The primary structure comprises 415 residues: Sensor protein kinase WalK (415 aa).

The HAMP domain maps to 11 to 63; it reads RTITKPITDMRNQTVEMSRGNYTQRVKIYGNDEIGELALAFNNLSKRVQEAQA. The PAS domain occupies 68–138; the sequence is EKRRLDSVIT…EIQENNDSFL (71 aa). Positions 78, 81, 171, and 175 each coordinate Zn(2+). A PAC domain is found at 121-185; sequence LEDEFKLEEI…QQQVERERRE (65 aa). Residues 189–407 form the Histidine kinase domain; that stretch reads NVSHELRTPL…SIFITLPCEV (219 aa). Histidine 192 bears the Phosphohistidine; by autocatalysis mark.

In terms of assembly, forms homodimers. Forms homooligomers. It depends on NH4(+) as a cofactor. Post-translationally, autophosphorylated.

The protein resides in the cell membrane. The enzyme catalyses ATP + protein L-histidine = ADP + protein N-phospho-L-histidine.. With respect to regulation, by zinc. Zinc-binding negatively regulates WalK kinase activity and thus autophosphorylation. Member of the two-component regulatory system WalK/WalR that regulates genes involved in cell wall metabolism, virulence regulation, biofilm production, oxidative stress resistance and antibiotic resistance via direct or indirect regulation of autolysins. Functions as a sensor protein kinase which is autophosphorylated at a histidine residue in the dimerization domain and transfers its phosphate group to the conserved aspartic acid residue in the regulatory domain of WalR. In turn, WalR binds to the upstream promoter regions of the target genes to positively and negatively regulate their expression. This Staphylococcus aureus protein is Sensor protein kinase WalK (walK).